Consider the following 678-residue polypeptide: Probable N-methylproline demethylase (678 aa).

FMN-binding positions include G59, Q102, R220, K299, and 321–322 (TR). C345, C351, and C363 together coordinate [4Fe-4S] cluster. The FAD site is built by A396, E415, Q423, R433, and A460.

In the N-terminal section; belongs to the NADH:flavin oxidoreductase/NADH oxidase family. The cofactor is FMN. It depends on FAD as a cofactor. [4Fe-4S] cluster is required as a cofactor.

It carries out the reaction N-methyl-L-proline + NAD(+) + H2O = L-proline + formaldehyde + NADH + H(+). The protein operates within amine and polyamine degradation; stachydrine degradation. Functionally, possible NADH-dependent oxidase, may function as a demethylase that converts N-methylproline to proline. The sequence is that of Probable N-methylproline demethylase from Rhizobium meliloti (strain 1021) (Ensifer meliloti).